Consider the following 93-residue polypeptide: DNA/RNA-binding protein Alba 2 (93 aa).

It belongs to the histone-like Alba family.

It localises to the cytoplasm. It is found in the chromosome. Its function is as follows. Binds double-stranded DNA tightly but without sequence specificity. Involved in DNA compaction. The sequence is that of DNA/RNA-binding protein Alba 2 from Methanopyrus kandleri (strain AV19 / DSM 6324 / JCM 9639 / NBRC 100938).